The sequence spans 1007 residues: Lysosomal alpha-mannosidase (1007 aa).

Low complexity-rich tracts occupy residues 1-10 and 19-28; these read MGADARPLGV and AARPGTSSRA. The disordered stretch occupies residues 1–30; the sequence is MGADARPLGVRAGGGGRGAARPGTSSRALP. Residues 1–50 form the signal peptide; that stretch reads MGADARPLGVRAGGGGRGAARPGTSSRALPPPLPPLSFLLLLLAAPGARA. Cystine bridges form between C56–C360 and C269–C274. Zn(2+) is bound by residues H73 and D75. An N-linked (GlcNAc...) asparagine glycan is attached at N134. D197 lines the Zn(2+) pocket. The active-site Nucleophile is D197. Residues N311, N347, and N369 are each glycosylated (N-linked (GlcNAc...) asparagine). 2 cysteine pairs are disulfide-bonded: C414-C474 and C495-C503. Residue H448 participates in Zn(2+) binding. N-linked (GlcNAc...) asparagine glycans are attached at residues N499, N543, N643, N649, N690, N764, and N927.

Belongs to the glycosyl hydrolase 38 family. Zn(2+) serves as cofactor. In terms of processing, processed into 3 peptides of 72 kDa, 41 kDa and 12 kDa.

The protein localises to the lysosome. It carries out the reaction Hydrolysis of terminal, non-reducing alpha-D-mannose residues in alpha-D-mannosides.. In terms of biological role, necessary for the catabolism of N-linked carbohydrates released during glycoprotein turnover. The protein is Lysosomal alpha-mannosidase (MAN2B1) of Felis catus (Cat).